A 375-amino-acid polypeptide reads, in one-letter code: MELEQICILKPDDEEEMESPSPSKTEENLGVVPLSCAFTRQEHCVSETKEREESTRRLSSLIFLYLIVMSVQIVGGFKANSLAVMTDAAHLLSDVAGLCVSLLAIKVSSWEANPRNSFGFKRLEVLAAFLSVQLIWLVSGVIIHEAIQRLLSRSREVNGEIMFGISAFGFFMNLVMVLWLGHNHSHHHHDHHHHHHNHKHQHQHHHKEVVAEEEEEEMNPLKGEKSSSKEMNINIQGAYLHAMADMIQSLGVMIGGGIIWVKPKWVLVDLICTLVFSAFALAATLPILKNIFGILMERVPRDMDIEKLERGLKRIDGVKIVYDLHVWEITVGRIVLSCHILPEPGASPKEIITGVRNFCRKSYGIYHATVQVESE.

Residues 1-57 (MELEQICILKPDDEEEMESPSPSKTEENLGVVPLSCAFTRQEHCVSETKEREESTRR) are Cytoplasmic-facing. Residues 58–78 (LSSLIFLYLIVMSVQIVGGFK) traverse the membrane as a helical segment. Residues 79–84 (ANSLAV) lie on the Vacuolar side of the membrane. A helical transmembrane segment spans residues 85-105 (MTDAAHLLSDVAGLCVSLLAI). The Cytoplasmic segment spans residues 106 to 122 (KVSSWEANPRNSFGFKR). A helical membrane pass occupies residues 123–143 (LEVLAAFLSVQLIWLVSGVII). Topologically, residues 144 to 160 (HEAIQRLLSRSREVNGE) are vacuolar. A helical membrane pass occupies residues 161-181 (IMFGISAFGFFMNLVMVLWLG). The tract at residues 182–206 (HNHSHHHHDHHHHHHNHKHQHQHHH) is required for zinc-binding. The Cytoplasmic portion of the chain corresponds to 182-240 (HNHSHHHHDHHHHHHNHKHQHQHHHKEVVAEEEEEEMNPLKGEKSSSKEMNINIQGAYL). Residues 241-261 (HAMADMIQSLGVMIGGGIIWV) traverse the membrane as a helical segment. Residues 262–264 (KPK) are Vacuolar-facing. The helical transmembrane segment at 265–285 (WVLVDLICTLVFSAFALAATL) threads the bilayer. Residues 286-375 (PILKNIFGIL…YHATVQVESE (90 aa)) are Cytoplasmic-facing.

It belongs to the cation diffusion facilitator (CDF) transporter (TC 2.A.4) family. SLC30A subfamily.

It is found in the vacuole membrane. Its function is as follows. Involved in sequestration of excess zinc in the cytoplasm into vacuoles to maintain zinc homeostasis. The chain is Metal tolerance protein B (MTPB) from Arabidopsis thaliana (Mouse-ear cress).